The sequence spans 247 residues: MFRYEAKVFKELVDSVSKILDEGLFIITGEGLRLRGMDPARVALVDIEIPSSSFFDFYMAGDVERVELGVNMETLKGVVARAKKGDQLEVRVREDKVLFIVESVVLRRYLLPNLEVIVDVPEDISLEFDATATVIADVVKKTLRDVELVGDIVEFDAGEDYLSIRSVGPERRRVETRLTRESPALIDLEVKEPATSRYDVGYLKRMLGVAKIAESIELSFSTDKPLKMVFKSPDGSRVTYLLAPSTG.

It belongs to the PCNA family. In terms of assembly, heterotrimer. The subunits circularize to form a toroid; DNA passes through its center. Replication factor C (RFC) is required to load the toroid on the DNA.

Functionally, sliding clamp subunit that acts as a moving platform for DNA processing. Responsible for tethering the catalytic subunit of DNA polymerase and other proteins to DNA during high-speed replication. The protein is DNA polymerase sliding clamp 1 of Aeropyrum pernix (strain ATCC 700893 / DSM 11879 / JCM 9820 / NBRC 100138 / K1).